The following is a 318-amino-acid chain: 2-keto-3-deoxygluconate permease (318 aa).

The next 10 membrane-spanning stretches (helical) occupy residues 10-30, 42-62, 76-96, 105-125, 139-159, 162-182, 199-219, 224-244, 254-274, and 289-309; these read IPGG…TFTP, GLIT…GASI, VLVV…GAFL, LLAG…NGGL, AGAF…VILG, GIAT…LIGF, VQTL…LSVI, FAGI…LILA, TAGI…LLIA, and ALVA…TALW.

It belongs to the KdgT transporter family.

It is found in the cell inner membrane. It catalyses the reaction 2-dehydro-3-deoxy-D-gluconate(in) + H(+)(in) = 2-dehydro-3-deoxy-D-gluconate(out) + H(+)(out). Catalyzes the proton-dependent uptake of 2-keto-3-deoxygluconate (KDG) into the cell. The chain is 2-keto-3-deoxygluconate permease from Pectobacterium atrosepticum (strain SCRI 1043 / ATCC BAA-672) (Erwinia carotovora subsp. atroseptica).